We begin with the raw amino-acid sequence, 1083 residues long: Histone-lysine N-methyltransferase ATX2 (1083 aa).

Residues 77–84 (HRRPEIVH) carry the Nuclear localization signal motif. The 65-residue stretch at 315–379 (PRDIIWAKLT…VKQAVSFLKG (65 aa)) folds into the PWWP domain. A disordered region spans residues 422–443 (TDCSERINSGEEDSSNSGDDYT). The region spanning 457–516 (DCLHRIGDLQIINLGRIVTDSEFFKDSKHTWPEGYTATRKFISLKDPNASAMYKMEVLRD) is the FYR N-terminal domain. One can recognise an FYR C-terminal domain in the interval 520–604 (KTRPVFRVTT…PPSKVSQRKY (85 aa)). Residues 626–677 (LDKCNVCHMDEEYENNLFLQCDKCRMMVHTRCYGQLEPHNGILWLCNLCRPV) form a PHD-type 1 zinc finger. Residues 682–715 (PPRCCLCPVVGGAMKPTTDGRWAHLACAIWIPET) form a C2HC pre-PHD-type zinc finger. The segment at 682 to 807 (PPRCCLCPVV…RLLSFCKRHR (126 aa)) is extended PHD domain (ePHD). The PHD-type 2 zinc-finger motif lies at 739–807 (LLCSICGVSY…RLLSFCKRHR (69 aa)). One can recognise an SET domain in the interval 919 to 1037 (KRLAFGKSGI…KWEELTYDYR (119 aa)). H929 contacts S-adenosyl-L-methionine. The O-linked (GlcNAc) serine glycan is linked to S968. S-adenosyl-L-methionine is bound by residues Y975 and 998–999 (NH). C1001 provides a ligand contact to Zn(2+). Residue Y1036 participates in S-adenosyl-L-methionine binding. A Post-SET domain is found at 1043-1059 (ERLACYCGFPRCRGVVN). 3 residues coordinate Zn(2+): C1047, C1049, and C1054.

It belongs to the class V-like SAM-binding methyltransferase superfamily. Histone-lysine methyltransferase family. TRX/MLL subfamily. Activated via O-glycosylation. In terms of tissue distribution, expressed in roots, leaves and flowers and, to a lower extent, in young seedlings.

The protein localises to the nucleus. It carries out the reaction N(6)-methyl-L-lysyl-[histone] + S-adenosyl-L-methionine = N(6),N(6)-dimethyl-L-lysyl-[histone] + S-adenosyl-L-homocysteine + H(+). Functionally, histone methyltransferase. Dimethylates 'Lys-4' of histone H3 (H3K4me2). H3 'Lys-4' methylation represents a specific tag for epigenetic transcriptional activation. Methylates only a limited fraction of nucleosomes of target genes (e.g. NAP and XTH33). Involved in epigenetic regulation of the floral repressor FLC and FT to prevent the transition from vegetative to reproductive development. The protein is Histone-lysine N-methyltransferase ATX2 of Arabidopsis thaliana (Mouse-ear cress).